The primary structure comprises 595 residues: Actin-histidine N-methyltransferase (595 aa).

Positions 1–22 are disordered; that stretch reads MGKKSRVKTQKSGTGATATVSP. Residues 10-20 are compositionally biased toward polar residues; it reads QKSGTGATATV. Residues arginine 75, 104 to 106, arginine 254, 275 to 279, and 325 to 327 each bind S-adenosyl-L-methionine; these read EGF, DMCNH, and SGF. The 221-residue stretch at 94-314 folds into the SET domain; that stretch reads EGFEMVNFKE…AGEQIYIFYG (221 aa). Serine 513 is modified (phosphoserine). Polar residues predominate over residues 549–563; the sequence is ENGLVNGENSIPNGT. The disordered stretch occupies residues 549–595; sequence ENGLVNGENSIPNGTRSEDENLNQEESKRAVEDAKGSSSDRADAVKE. Residues 573–595 show a composition bias toward basic and acidic residues; sequence EESKRAVEDAKGSSSDRADAVKE.

It belongs to the class V-like SAM-binding methyltransferase superfamily. SETD3 actin-histidine methyltransferase family. In terms of assembly, interacts with MYOD1. Post-translationally, phosphorylated by GSK3B, which is required for recognition by the SCF(FBXW7) complex and subsequent degradation. Ubiquitinated by the SCF(FBXW7) complex following phosphorylation by GSK3B, leading to its degradation by the proteasome.

The protein resides in the cytoplasm. It localises to the nucleus. The enzyme catalyses L-histidyl-[protein] + S-adenosyl-L-methionine = N(tele)-methyl-L-histidyl-[protein] + S-adenosyl-L-homocysteine + H(+). Its function is as follows. Protein-histidine N-methyltransferase that specifically mediates 3-methylhistidine (tele-methylhistidine) methylation of actin at 'His-73'. Histidine methylation of actin is required for smooth muscle contraction of the laboring uterus during delivery. Does not have protein-lysine N-methyltransferase activity and probably only catalyzes histidine methylation of actin. In Callithrix jacchus (White-tufted-ear marmoset), this protein is Actin-histidine N-methyltransferase.